A 367-amino-acid chain; its full sequence is Farnesyl pyrophosphate synthase (367 aa).

Lys71, Arg74, and Gln110 together coordinate isopentenyl diphosphate. Asp117 and Asp121 together coordinate Mg(2+). Arg126 serves as a coordination point for dimethylallyl diphosphate. Arg127 contacts isopentenyl diphosphate. Dimethylallyl diphosphate-binding residues include Lys214, Thr215, Gln254, Lys271, and Lys280.

This sequence belongs to the FPP/GGPP synthase family. In terms of assembly, homodimer. It depends on Mg(2+) as a cofactor.

It localises to the cytoplasm. It carries out the reaction isopentenyl diphosphate + dimethylallyl diphosphate = (2E)-geranyl diphosphate + diphosphate. The catalysed reaction is isopentenyl diphosphate + (2E)-geranyl diphosphate = (2E,6E)-farnesyl diphosphate + diphosphate. Its pathway is isoprenoid biosynthesis; farnesyl diphosphate biosynthesis; farnesyl diphosphate from geranyl diphosphate and isopentenyl diphosphate: step 1/1. The protein operates within isoprenoid biosynthesis; geranyl diphosphate biosynthesis; geranyl diphosphate from dimethylallyl diphosphate and isopentenyl diphosphate: step 1/1. Functionally, catalyzes the sequential condensation of isopentenyl pyrophosphate with the allylic pyrophosphates, dimethylallyl pyrophosphate, and then with the resultant geranylpyrophosphate to the ultimate product farnesyl pyrophosphate. The polypeptide is Farnesyl pyrophosphate synthase (FDPS) (Gallus gallus (Chicken)).